A 421-amino-acid polypeptide reads, in one-letter code: Cytochrome c biogenesis protein Ccs1 (421 aa).

Transmembrane regions (helical) follow at residues Leu12–Ile32, Thr71–Leu91, and Ile157–Ser177.

Belongs to the Ccs1/CcsB family. May interact with CcsA.

It is found in the plastid. Its subcellular location is the chloroplast thylakoid membrane. Its function is as follows. Required during biogenesis of c-type cytochromes (cytochrome c6 and cytochrome f) at the step of heme attachment. This Thalassiosira pseudonana (Marine diatom) protein is Cytochrome c biogenesis protein Ccs1.